Consider the following 101-residue polypeptide: MAVKHLIVLKFKDEITEAQKEEFFKTYVNLVNIIPAMKDVYWGKDVTQKNKEEGYTHIVEVTFESVETIQDYIIHPAHVGFGDVYRSFWEKLLIFDYTPRK.

In terms of domain architecture, Stress-response A/B barrel spans 3 to 97; that stretch reads VKHLIVLKFK…FWEKLLIFDY (95 aa). 3,5,7-trioxododecanoyl-CoA is bound at residue H5. V31, I34, and M37 together coordinate Mg(2+). Y72 provides a ligand contact to 3,5,7-trioxododecanoyl-CoA. Active-site acid/base catalyst residues include Y72 and H75.

In terms of assembly, homodimer. Expressed in glandular trichomes and at lower levels in female flowers.

The protein resides in the cytoplasm. The enzyme catalyses 3,5,7-trioxododecanoyl-CoA = olivetolate + CoA + H(+). It functions in the pathway secondary metabolite biosynthesis; terpenoid biosynthesis. Its function is as follows. Involved in the biosynthesis of cannabinoids-related terpenophenolic natural products, which have pharmacological activity. Polyketide cyclase which functions in concert with OLS/TKS to form olivetolic acid. Has no intrinsic polyketide synthase activity and requires the presence of OLS to produce olivetolic acid. The polypeptide is Olivetolic acid cyclase (Cannabis sativa (Hemp)).